Reading from the N-terminus, the 750-residue chain is NAD(P)H-quinone oxidoreductase subunit 5, chloroplastic (750 aa).

16 helical membrane passes run 9-29 (WIIP…LLLF), 40-60 (WAFP…DLSI), 89-109 (IDSL…LVLI), 125-145 (FAYL…SNLI), 147-167 (IYVF…FWFT), 185-205 (GDFG…SLEF), 219-239 (NEVN…GSVA), 258-278 (TPIS…FLVA), 280-300 (LLPL…IGII), 327-347 (LGYM…FHLI), 354-374 (ALLF…VGYS), 396-416 (TSFL…CFWS), 425-445 (WLYS…TAFY), 554-574 (FSIL…ISFS), 607-627 (FLTN…IASF), and 728-748 (YILL…FLFT).

The protein belongs to the complex I subunit 5 family. In terms of assembly, NDH is composed of at least 16 different subunits, 5 of which are encoded in the nucleus.

It is found in the plastid. Its subcellular location is the chloroplast thylakoid membrane. It catalyses the reaction a plastoquinone + NADH + (n+1) H(+)(in) = a plastoquinol + NAD(+) + n H(+)(out). The catalysed reaction is a plastoquinone + NADPH + (n+1) H(+)(in) = a plastoquinol + NADP(+) + n H(+)(out). Functionally, NDH shuttles electrons from NAD(P)H:plastoquinone, via FMN and iron-sulfur (Fe-S) centers, to quinones in the photosynthetic chain and possibly in a chloroplast respiratory chain. The immediate electron acceptor for the enzyme in this species is believed to be plastoquinone. Couples the redox reaction to proton translocation, and thus conserves the redox energy in a proton gradient. The polypeptide is NAD(P)H-quinone oxidoreductase subunit 5, chloroplastic (ndhF) (Glycine max (Soybean)).